The following is a 232-amino-acid chain: MSNNNNSPTTVNQETTTSREVSITLPTDQSPQTSPGSSSSPSPRPSGGSPARRTATGLSGKHSIFRGIRLRNGKWVSEIREPRKTTRIWLGTYPVPEMAAAAYDVAALALKGPDAVLNFPGLALTYVAPVSNSAADIRAAASRAAEMKQPDQGGDEKVLEPVQPGKEEELEEVSCNSCSLEFMDEEAMLNMPTLLTEMAEGMLMSPPRMMIHPTMEDDSPENHEGDNLWSYK.

Residues 1–29 (MSNNNNSPTTVNQETTTSREVSITLPTDQ) show a composition bias toward polar residues. Residues 1–63 (MSNNNNSPTT…TATGLSGKHS (63 aa)) are disordered. Over residues 30-50 (SPQTSPGSSSSPSPRPSGGSP) the composition is skewed to low complexity. The AP2/ERF DNA-binding region spans 64 to 120 (IFRGIRLRNGKWVSEIREPRKTTRIWLGTYPVPEMAAAAYDVAALALKGPDAVLNFP). Positions 213–232 (PTMEDDSPENHEGDNLWSYK) are disordered.

The protein belongs to the AP2/ERF transcription factor family. ERF subfamily.

The protein localises to the nucleus. Probably acts as a transcriptional activator. Binds to the GCC-box pathogenesis-related promoter element. May be involved in the regulation of gene expression by stress factors and by components of stress signal transduction pathways. In Arabidopsis thaliana (Mouse-ear cress), this protein is Ethylene-responsive transcription factor ERF025 (ERF025).